Reading from the N-terminus, the 267-residue chain is Ribosomal RNA small subunit methyltransferase A (267 aa).

S-adenosyl-L-methionine is bound by residues asparagine 12, isoleucine 14, glycine 39, glutamate 60, aspartate 84, and asparagine 110.

This sequence belongs to the class I-like SAM-binding methyltransferase superfamily. rRNA adenine N(6)-methyltransferase family. RsmA subfamily.

The protein localises to the cytoplasm. It carries out the reaction adenosine(1518)/adenosine(1519) in 16S rRNA + 4 S-adenosyl-L-methionine = N(6)-dimethyladenosine(1518)/N(6)-dimethyladenosine(1519) in 16S rRNA + 4 S-adenosyl-L-homocysteine + 4 H(+). In terms of biological role, specifically dimethylates two adjacent adenosines (A1518 and A1519) in the loop of a conserved hairpin near the 3'-end of 16S rRNA in the 30S particle. May play a critical role in biogenesis of 30S subunits. This Mesoplasma florum (strain ATCC 33453 / NBRC 100688 / NCTC 11704 / L1) (Acholeplasma florum) protein is Ribosomal RNA small subunit methyltransferase A.